The following is a 261-amino-acid chain: Transcription antitermination protein NusB (261 aa).

Positions 168-261 (ARVEDQPSDD…DLHKKDTTDD (94 aa)) are disordered. The span at 217-228 (VDTTSGNASDPE) shows a compositional bias: polar residues. Residues 242–261 (PTSKDHELATDLHKKDTTDD) are compositionally biased toward basic and acidic residues.

It belongs to the NusB family.

Its function is as follows. Involved in transcription antitermination. Required for transcription of ribosomal RNA (rRNA) genes. Binds specifically to the boxA antiterminator sequence of the ribosomal RNA (rrn) operons. In Cutibacterium acnes (strain DSM 16379 / KPA171202) (Propionibacterium acnes), this protein is Transcription antitermination protein NusB.